A 295-amino-acid polypeptide reads, in one-letter code: MSATVLDGKAAAAAVKADLKERVAALRERGVVPGLGTVLVGDDPGSASYVRGKHRDCAEVGIASIQVELPATATQGEIESEIAQLNANPDCTGFIVQLPLPAGIDANRILEQVDPDKDADGLHPTNLGRLVLRVREEITSPLPCTPRGVIDLLLRHDVPLDGAEVVVVGRGVTVGRPIGLLLTRRHPNATVTLCHTGTRDLESHLRRADVIVAAAGVAGLVTKENVKPGAAVLDVGVSRVLDPATGKSKLAGDVALDVAEVAGFVAPNPGGVGPMTRALLLTNVVESAERAAGLR.

Residues 169 to 171 (GRG), Thr196, and Val237 each bind NADP(+).

Belongs to the tetrahydrofolate dehydrogenase/cyclohydrolase family. Homodimer.

The enzyme catalyses (6R)-5,10-methylene-5,6,7,8-tetrahydrofolate + NADP(+) = (6R)-5,10-methenyltetrahydrofolate + NADPH. It catalyses the reaction (6R)-5,10-methenyltetrahydrofolate + H2O = (6R)-10-formyltetrahydrofolate + H(+). It functions in the pathway one-carbon metabolism; tetrahydrofolate interconversion. Its function is as follows. Catalyzes the oxidation of 5,10-methylenetetrahydrofolate to 5,10-methenyltetrahydrofolate and then the hydrolysis of 5,10-methenyltetrahydrofolate to 10-formyltetrahydrofolate. The protein is Bifunctional protein FolD of Kineococcus radiotolerans (strain ATCC BAA-149 / DSM 14245 / SRS30216).